The sequence spans 202 residues: Nucleoside triphosphate pyrophosphatase (202 aa).

Residue D79 is the Proton acceptor of the active site.

It belongs to the Maf family. A divalent metal cation serves as cofactor.

Its subcellular location is the cytoplasm. It carries out the reaction a ribonucleoside 5'-triphosphate + H2O = a ribonucleoside 5'-phosphate + diphosphate + H(+). The enzyme catalyses a 2'-deoxyribonucleoside 5'-triphosphate + H2O = a 2'-deoxyribonucleoside 5'-phosphate + diphosphate + H(+). Functionally, nucleoside triphosphate pyrophosphatase. May have a dual role in cell division arrest and in preventing the incorporation of modified nucleotides into cellular nucleic acids. In Rhodospirillum rubrum (strain ATCC 11170 / ATH 1.1.1 / DSM 467 / LMG 4362 / NCIMB 8255 / S1), this protein is Nucleoside triphosphate pyrophosphatase.